A 2219-amino-acid chain; its full sequence is MDEDDNLSNADISIDDEEVVREQTHHPPMQEDQELDNEDGSSDVDLSSVYVVPPIVSAPSPASVRIAGGSTIGGGGVAAGAVPTTTDNSHSPFHDWDSSVAAAAAPPPPPPRTGPTTTTSSGTAAESGAASALSDDAGAKPSFFFGASSFSLRSRKEVAALINTECCRGSPTPDLDSIMDTLFNPGTPIDNLDNIEWIRWLIAGGRTPQEFVKIVRSYDNHAKCGLVWVPHVVAYRCRTCGISPCMSICRDCFKKGNHTNHDFNMFLSQAGGACDCGDTSVMKAEGFCSDHGINNRVNRDPVPNNLLAVAEAIMPKLLFRLLQHFREHSDTPLEVQAITSYSCEEFANMLIDLNNMGEIMRKVMTRTLINPEVYAFFMEAPCQDTRNGRFLKANREKYEDAVNRFPNPEPPDEYRDLPALGDKLVHTTLLEEFIFWTFKFEFPQTLVCFLLNMLPDQDYKEHLTRTFVMHYSRIPSVLEMSRDPDTLSNRVVHMSVQLFSNESLALKMVNELSLLHVMIISLKLMMSKILIQNTLHDPNKNFHFVIDCTRQVMKDHCYWPLVSDFNNVLSHESVALVFLRDDNLIDMWFQFLQMLQGMNVNVRETASHVEFEPNSYYAAFSCELEASAYPMWSIISHLQDGTHAHLAKKIINYCVTTLHEWLDSIYFMEARLSMEEMMQASFHFPLHRYLAAFVCQAVTKMGISLNDVLPSRPYLLPLLMIHPLRVQSFFYEILAGKWVRNGLQIKGQAMTYIQANFCNSMADMDLFFLQICATNLPQYFFLQNTIELFDVGQWLETAPLKQPQKAEQSSMLEGFLTFLATLVTSRTNLGNDEATQCIIEISALLATENKTHSQLLELMPERSGNVHTKNFETFLKKLSVYKAPSSGSENLEQGLFTPIDEVWEKHYDPLHVLLRAVHRRDFQSSLDRFTNYVKSKDKMPASGNLWPPFRLPHALPATSSFSDPCKILNSRIFHSTILSIFFRAVHTRDVSEHLLALAVFLLEIAVETSDDVGSGTGDRAPPALAAVVESSSGPGYHGYGTGRHEPPKLFHCYPTDNLSCNLRHVVKKVSLKSRDPQVITSSYRSNPFYSDLDFEVEADPEQSMRMIGQGDPEGDEATGGAGLGMGAHSRRNVSQALVPMRVPGMEVALPPDLSVVAETGVVIRQDSNEDDLLREGNHAMDMSPPAALDFHFPLQQITLPESGMEVAIRRDLLLAETNNMGAIAGGAGGGANASATPPAGASNEMFSPTTPTGSGMLLPFQRVQPVAVPSSGNMDIVPSNAMGAGGSFTSGVSGSGTGRRMNYETGGARKRSVDIAIGGSNKDELHLDESILSLLLKLHSQLSGTLDSFSLSDGEDQSSDDDSTMDVDCNEASTSMAAAESTALAERGRSKRNYKNIHVSSSRIGDGPFFIGNLLRKIAKQDEQCAQSIDDIRARLWPNQREKQAEAKAREAKEKEERRKKARERQQKMMQDFANKQKLFMQSAAASSSGMGYGPEDEDDEELYEEQPREKEYDCIICNCTTPSTESNPIGLVVLVESSGIVGHRRRIAERLPLPINAEDESRLAHTTRLAAEFNRRTELLSLKFGDESWYLSNNMAYDNGVHVQSCGHHVHLSCLEAYLKTLYTTQRQPVQDRGEFYCPVCRQLSNSVLPLSPQLDRPTHLVRSGNQPFERLVADLTDLIKENETIPQPTKLTEAMGHAMEVMTNIAQRKVKCSSITFRKLFIFVTSIARTNLEAEIIQRGGSLCTANATRYKPKRECIVPLLHVLSVHVRVLVEWPLWSSWASLAGLPVTATEPLPAHCLELIPSILADPIALLLKFILLAPLQLDQDYFTCMVKVMYNLLYYQIVVQLCVTLTDLECDHIVKVYGSTSVGSDNSAAESQQQESAAGTTNNRRRAGQQQQSSSQLGKAMALVLSQTNDLVHLRRDCIPSTSSSAAASAAGSSSTTSTNHGASAATASSATTIEVNLKSMELQLQALCLPFLRVAALLRQHLYRHEMPEISAPGLEFVRLVYYLELVTDSMDWDCFNASKGLCFIPGTETTLPQFWCQQLMEVRPPADTVRELVLINQHSLWQQPRLLELPREYERLFTYYHERPCLNCYKVPKESSICLLCGTIVCLKQNCCAENDCCEAVRHTLSCGGGIGIFLVVTSTYIIVIRGRRACLWGSLYLDDFDEEDRDLKRGKPLYLSKDRFNLLESQWLSHKFAHTKHTWVFHRDLL.

Disordered regions lie at residues 1 to 48 (MDED…DLSS) and 78 to 134 (AAGA…SALS). Residues 20–29 (VREQTHHPPM) show a composition bias toward basic and acidic residues. The segment covering 31 to 42 (EDQELDNEDGSS) has biased composition (acidic residues). Low complexity predominate over residues 114–134 (GPTTTTSSGTAAESGAASALS). Residues 222–293 (AKCGLVWVPH…AEGFCSDHGI (72 aa)) form a UBR-type zinc finger. Disordered stretches follow at residues 1348 to 1367 (SFSLSDGEDQSSDDDSTMDV) and 1440 to 1464 (QREKQAEAKAREAKEKEERRKKARE). Residues 1353–1367 (DGEDQSSDDDSTMDV) are compositionally biased toward acidic residues. The RING-type; degenerate zinc-finger motif lies at 1607–1643 (CGHHVHLSCLEAYLKTLYTTQRQPVQDRGEFYCPVCR). Disordered stretches follow at residues 1872–1902 (VGSDNSAAESQQQESAAGTTNNRRRAGQQQQ) and 1935–1954 (SAAASAAGSSSTTSTNHGAS). The segment covering 1877 to 1888 (SAAESQQQESAA) has biased composition (low complexity).

This sequence belongs to the E3 ubiquitin-protein ligase UBR1-like family. In terms of assembly, selectively interacts (via UBR-type zinc finger) with the cleaved form of Diap1; this interaction is enhanced by tal. Interacts with tal and Rrp1. Interacts with ovo isoform B (via N-terminus). Interacts with Cad99C (via the cytoplasmic domain). Interacts with ck and Sans. Interacts with cos (via Kinesin motor domain). In vitro, self-ubiquitination in the presence of E1, E2 and ubiquitin.

The protein localises to the cytoplasm. The protein resides in the nucleus. It catalyses the reaction S-ubiquitinyl-[E2 ubiquitin-conjugating enzyme]-L-cysteine + [acceptor protein]-L-lysine = [E2 ubiquitin-conjugating enzyme]-L-cysteine + N(6)-ubiquitinyl-[acceptor protein]-L-lysine.. The protein operates within protein modification; protein ubiquitination. Its function is as follows. E3 ubiquitin-protein ligase which is a component of the N-end rule pathway. Recognizes and binds to proteins bearing specific N-terminal residues, leading to their ubiquitination and subsequent degradation. Binds to the E3 ubiquitin-protein ligase Diap1 and enhances its ubiquitination and anti-apoptotic functions. Essential during trichome development for the ubiquitination of the N-terminus of ovo isoform B (svb), converting it from a transcriptional inhibitor to an activator. Positively regulates a hh-signaling pathway which functions in photoreceptor differentiation. Activation of hh up-regulates transcription of Ubr3, which in turn promotes hh signaling by mediating the ubiquitination and degradation of cos. Necessary for auditory transduction: plays a role in Johnston's organ organization by acting in the regulation of zip and ck function in scolopidial apical attachment. Likely to function by acting in a pathway that negatively regulates the ubiquitination of zip, consequently affecting its interaction with ck. May also negatively regulate a component of the SCF (SKP1-CUL1-F-box protein) E3 ubiquitin-protein ligase complex Cul1, which also appears to function in the negative regulation of the zip-ck interaction and scolopidial apical attachment. This Drosophila melanogaster (Fruit fly) protein is E3 ubiquitin-protein ligase Ubr3.